A 214-amino-acid chain; its full sequence is Small ribosomal subunit protein eS6 (214 aa).

The protein belongs to the eukaryotic ribosomal protein eS6 family.

In Saccharolobus solfataricus (strain ATCC 35092 / DSM 1617 / JCM 11322 / P2) (Sulfolobus solfataricus), this protein is Small ribosomal subunit protein eS6.